The following is a 282-amino-acid chain: Cuticle collagen 8 (282 aa).

Residues 1-24 form the signal peptide; it reads MLVCVFVALYTMMGLLTDIKQLQS. The disordered stretch occupies residues 86–282; it reads GPKSEGCPAG…CPCPGRSYKA (197 aa). Triple-helical region stretches follow at residues 95 to 124 and 141 to 269; these read GPPGPPGEGGQSGEPGHDGDDGKPGAPGVI and GRPG…PGPD. The segment covering 170 to 180 has biased composition (gly residues); sequence TGGQGGPGEQG. Pro residues predominate over residues 214 to 224; it reads PPGPRGPPGPE. The segment covering 225-234 has biased composition (gly residues); that stretch reads GNPGGAGEDG. Over residues 235–244 the composition is skewed to low complexity; sequence NQGPVGHPGV.

It belongs to the cuticular collagen family. In terms of assembly, collagen polypeptide chains are complexed within the cuticle by disulfide bonds and other types of covalent cross-links.

Functionally, nematode cuticles are composed largely of collagen-like proteins. The cuticle functions both as an exoskeleton and as a barrier to protect the worm from its environment. The chain is Cuticle collagen 8 (col-8) from Caenorhabditis elegans.